The primary structure comprises 549 residues: Probable protein kinase UbiB (549 aa).

One can recognise a Protein kinase domain in the interval 123–501; sequence DFNDTPLASA…QQKSHKSNYL (379 aa). ATP contacts are provided by residues 129–137 and K152; that span reads LASASISQV. Residue D287 is the Proton acceptor of the active site. Transmembrane regions (helical) follow at residues 498 to 518 and 519 to 539; these read SNYL…LFTQ and IVTL…WAIG.

This sequence belongs to the ABC1 family. UbiB subfamily.

It is found in the cell inner membrane. It participates in cofactor biosynthesis; ubiquinone biosynthesis [regulation]. Functionally, is probably a protein kinase regulator of UbiI activity which is involved in aerobic coenzyme Q (ubiquinone) biosynthesis. The chain is Probable protein kinase UbiB from Shewanella frigidimarina (strain NCIMB 400).